The sequence spans 347 residues: Holliday junction branch migration complex subunit RuvB (347 aa).

Residues 1-183 (MTDVPRMVTP…FGIPVRLNFY (183 aa)) are large ATPase domain (RuvB-L). Residues L22, R23, G64, K67, T68, T69, 130–132 (EDF), R173, Y183, and R220 each bind ATP. Position 68 (T68) interacts with Mg(2+). The segment at 184 to 254 (TVDELEKIVS…IADHALGALE (71 aa)) is small ATPAse domain (RuvB-S). The tract at residues 257–347 (AAGLDAMDRR…QFGLFGGEDE (91 aa)) is head domain (RuvB-H). R293, R312, and R317 together coordinate DNA.

It belongs to the RuvB family. In terms of assembly, homohexamer. Forms an RuvA(8)-RuvB(12)-Holliday junction (HJ) complex. HJ DNA is sandwiched between 2 RuvA tetramers; dsDNA enters through RuvA and exits via RuvB. An RuvB hexamer assembles on each DNA strand where it exits the tetramer. Each RuvB hexamer is contacted by two RuvA subunits (via domain III) on 2 adjacent RuvB subunits; this complex drives branch migration. In the full resolvosome a probable DNA-RuvA(4)-RuvB(12)-RuvC(2) complex forms which resolves the HJ.

The protein resides in the cytoplasm. It carries out the reaction ATP + H2O = ADP + phosphate + H(+). Functionally, the RuvA-RuvB-RuvC complex processes Holliday junction (HJ) DNA during genetic recombination and DNA repair, while the RuvA-RuvB complex plays an important role in the rescue of blocked DNA replication forks via replication fork reversal (RFR). RuvA specifically binds to HJ cruciform DNA, conferring on it an open structure. The RuvB hexamer acts as an ATP-dependent pump, pulling dsDNA into and through the RuvAB complex. RuvB forms 2 homohexamers on either side of HJ DNA bound by 1 or 2 RuvA tetramers; 4 subunits per hexamer contact DNA at a time. Coordinated motions by a converter formed by DNA-disengaged RuvB subunits stimulates ATP hydrolysis and nucleotide exchange. Immobilization of the converter enables RuvB to convert the ATP-contained energy into a lever motion, pulling 2 nucleotides of DNA out of the RuvA tetramer per ATP hydrolyzed, thus driving DNA branch migration. The RuvB motors rotate together with the DNA substrate, which together with the progressing nucleotide cycle form the mechanistic basis for DNA recombination by continuous HJ branch migration. Branch migration allows RuvC to scan DNA until it finds its consensus sequence, where it cleaves and resolves cruciform DNA. This chain is Holliday junction branch migration complex subunit RuvB, found in Nitrobacter hamburgensis (strain DSM 10229 / NCIMB 13809 / X14).